A 199-amino-acid chain; its full sequence is Interleukin-11 (199 aa).

Residues 1–21 (MNCVCRLVLVVLSLWPDRVVA) form the signal peptide. The important for interaction with IL11RA and for the stimulation of cell proliferation stretch occupies residues 182–190 (HLTLDWAVR).

It belongs to the IL-6 superfamily. In terms of assembly, interacts with IL11RA to associate with IL6ST, giving rise to a multimeric signaling complex.

It localises to the secreted. Cytokine that stimulates the proliferation of hematopoietic stem cells and megakaryocyte progenitor cells and induces megakaryocyte maturation resulting in increased platelet production. Also promotes the proliferation of hepatocytes in response to liver damage. Binding to its receptor formed by IL6ST and IL11RA activates a signaling cascade that promotes cell proliferation. Signaling leads to the activation of intracellular protein kinases and the phosphorylation of STAT3. The interaction with the membrane-bound IL11RA and IL6ST stimulates 'classic signaling', whereas the binding of IL11 and soluble IL11RA to IL6ST stimulates 'trans-signaling'. The chain is Interleukin-11 from Rattus norvegicus (Rat).